The chain runs to 900 residues: Translation initiation factor IF-2 (900 aa).

2 disordered regions span residues 30–77 and 89–291; these read GEFV…SLDK and NGKA…YDSM. A compositionally biased stretch (low complexity) spans 89-112; that stretch reads NGKATAAPAKAADSGGAAIVSPTT. Residues 113-129 are compositionally biased toward pro residues; sequence PAAPEPPTAVPPSPQAP. Residues 175-187 show a composition bias toward low complexity; that stretch reads PGTARPGVPRPGA. Positions 215–271 are enriched in gly residues; the sequence is GRPGAPGAGRSDAGGGNYRGGGVGAAPGTGFRGRPGGGGGGRPGQRGGAAGAFGRPG. The span at 275-284 shows a compositional bias: basic residues; it reads RRGRKSKRQK. In terms of domain architecture, tr-type G spans 396–567; the sequence is VRPPVVTVMG…AVLLTADAAL (172 aa). A G1 region spans residues 405 to 412; the sequence is GHVDHGKT. 405–412 lines the GTP pocket; sequence GHVDHGKT. The interval 430-434 is G2; that stretch reads GITQH. The segment at 455 to 458 is G3; that stretch reads DTPG. GTP is bound by residues 455–459 and 509–512; these read DTPGH and NKID. Residues 509 to 512 are G4; the sequence is NKID. The interval 545–547 is G5; that stretch reads SAK.

Belongs to the TRAFAC class translation factor GTPase superfamily. Classic translation factor GTPase family. IF-2 subfamily.

The protein resides in the cytoplasm. Its function is as follows. One of the essential components for the initiation of protein synthesis. Protects formylmethionyl-tRNA from spontaneous hydrolysis and promotes its binding to the 30S ribosomal subunits. Also involved in the hydrolysis of GTP during the formation of the 70S ribosomal complex. This Mycobacterium bovis (strain BCG / Pasteur 1173P2) protein is Translation initiation factor IF-2.